The sequence spans 793 residues: Transcription factor opdR (793 aa).

Disordered stretches follow at residues 1–29, 60–113, and 457–476; these read MAQD…DPCR, TASS…QSQN, and LDDE…QPSE. The segment at residues 25–53 is a DNA-binding region (zn(2)-C6 fungal-type); sequence CDPCRRRKVRCDRKFPCGQCERARTALQC.

Its subcellular location is the nucleus. Transcription factor; part of the gene cluster that mediates the biosynthesis of oxopyrrolidines, polyketide-amino acid hybrid compounds with feature structures of tetramic acid. This chain is Transcription factor opdR, found in Penicillium oxalicum (strain 114-2 / CGMCC 5302) (Penicillium decumbens).